A 1400-amino-acid chain; its full sequence is DNA-directed RNA polymerase subunit beta (1400 aa).

It belongs to the RNA polymerase beta chain family. As to quaternary structure, the RNAP catalytic core consists of 2 alpha, 1 beta, 1 beta' and 1 omega subunit. When a sigma factor is associated with the core the holoenzyme is formed, which can initiate transcription.

The enzyme catalyses RNA(n) + a ribonucleoside 5'-triphosphate = RNA(n+1) + diphosphate. Functionally, DNA-dependent RNA polymerase catalyzes the transcription of DNA into RNA using the four ribonucleoside triphosphates as substrates. The chain is DNA-directed RNA polymerase subunit beta from Acidiphilium cryptum (strain JF-5).